The primary structure comprises 184 residues: Prolyl-tRNA synthetase associated domain-containing protein 1 (184 aa).

Belongs to the PRORSD1 family.

The chain is Prolyl-tRNA synthetase associated domain-containing protein 1 (Prorsd1) from Danio rerio (Zebrafish).